We begin with the raw amino-acid sequence, 346 residues long: Uroporphyrinogen decarboxylase (346 aa).

Substrate contacts are provided by residues Arg26–Arg30, Asp76, Tyr153, Ser208, and His323.

It belongs to the uroporphyrinogen decarboxylase family. As to quaternary structure, homodimer.

The protein resides in the cytoplasm. It catalyses the reaction uroporphyrinogen III + 4 H(+) = coproporphyrinogen III + 4 CO2. It participates in porphyrin-containing compound metabolism; protoporphyrin-IX biosynthesis; coproporphyrinogen-III from 5-aminolevulinate: step 4/4. Catalyzes the decarboxylation of four acetate groups of uroporphyrinogen-III to yield coproporphyrinogen-III. In Prochlorococcus marinus (strain MIT 9515), this protein is Uroporphyrinogen decarboxylase.